A 1043-amino-acid polypeptide reads, in one-letter code: Desmoglein-1 (1043 aa).

The N-terminal stretch at 1–23 is a signal peptide; sequence MNWPFFRAAVVLFIFLVVLEVNS. A propeptide spanning residues 24–49 is cleaved from the precursor; the sequence is DFRIQVRDYNTKNGTIKWHSLRRQKR. 4 Cadherin domains span residues 50–158, 159–270, 271–385, and 386–498; these read EWIK…PVFS, MSTF…PYME, LPTQ…GSVF, and RPGS…VNGS. The Extracellular segment spans residues 50 to 551; that stretch reads EWIKFAAACR…PLRDNVHFGP (502 aa). Residues asparagine 110 and asparagine 180 are each glycosylated (N-linked (GlcNAc...) asparagine). The N-linked (GlcNAc...) asparagine glycan is linked to asparagine 496. The chain crosses the membrane as a helical span at residues 552 to 572; it reads AGIGLLIMGFLVLGLVPFLLM. Residues 573–1043 are Cytoplasmic-facing; the sequence is CCDCGGAPGG…TKYSTVQYTK (471 aa). The interval 770–807 is disordered; sequence DVEPFPDSDPSWPPKSTEPVCPPQGTEPTGGGHPPISP. Desmoglein repeat repeat units lie at residues 819–845, 846–875, 876–905, 906–933, and 934–962; these read TYPS…TVTE, SYTS…ERVV, GPIS…ERVI, APSS…ERVI, and QPTS…ERVV.

Binds to JUP/plakoglobin. Interacts with PKP2. Interacts with DSC3; there is evidence to suggest that the interaction promotes cell-cell adhesion of keratinocytes. As to expression, expressed in the epidermis. Expressed in the muzzle epithelium.

Its subcellular location is the cell membrane. It localises to the cell junction. The protein resides in the desmosome. The protein localises to the cytoplasm. It is found in the nucleus. Its function is as follows. Component of intercellular desmosome junctions. Involved in the interaction of plaque proteins and intermediate filaments mediating cell-cell adhesion. The polypeptide is Desmoglein-1 (DSG1) (Bos taurus (Bovine)).